The primary structure comprises 49 residues: Large ribosomal subunit protein eL40 (49 aa).

It belongs to the eukaryotic ribosomal protein eL40 family.

This Haloquadratum walsbyi (strain DSM 16790 / HBSQ001) protein is Large ribosomal subunit protein eL40.